The following is a 151-amino-acid chain: uncharacterized protein (151 aa).

The N-terminal stretch at 1 to 24 (MYYSIIIACLVLLLCLVIYVGHRA) is a signal peptide.

Belongs to the asfivirus EP152R family.

The protein localises to the virion. This is an uncharacterized protein from Ornithodoros (relapsing fever ticks).